The primary structure comprises 506 residues: DEAD-box ATP-dependent RNA helicase CshA (506 aa).

The Q motif motif lies at 2–30; the sequence is QNFKELGISDNTVQSLESMGFKEPTPIQK. A Helicase ATP-binding domain is found at 33–203; sequence IPYALQGIDI…QQFMKSPKII (171 aa). Position 46 to 53 (46 to 53) interacts with ATP; the sequence is AQTGTGKT. Residues 150-153 carry the DEAD box motif; it reads DEAD. In terms of domain architecture, Helicase C-terminal spans 214–375; the sequence is QIEEFYTIVK…LRPPHRKEVL (162 aa). The segment at 436–506 is disordered; it reads EKPLSRKGRN…KGRTFADHQK (71 aa). Residues 468–480 are compositionally biased toward basic residues; it reads KRSKGYSSKKKST.

Belongs to the DEAD box helicase family. CshA subfamily. As to quaternary structure, oligomerizes, may be a member of the RNA degradosome.

The protein resides in the cytoplasm. It carries out the reaction ATP + H2O = ADP + phosphate + H(+). Its function is as follows. DEAD-box RNA helicase possibly involved in RNA degradation. Unwinds dsRNA in both 5'- and 3'-directions, has RNA-dependent ATPase activity. The protein is DEAD-box ATP-dependent RNA helicase CshA of Staphylococcus aureus (strain MRSA252).